A 189-amino-acid chain; its full sequence is MTDKTEKVAVDPETVFKRPRECDSPSYQKRQRMALLARKQGAGDSLIAGSAMSKEKKLMTGHAIPPSQLDSQIDDFTGFSKDRMMQKPGSNAPVGGNVTSSFSGDDLECRETAFSPKSQQEINADIKRQLVKELRCVGQKYEKIFEMLEGVQGPTAVRKRFFESIIKEAARCMRRDFVKHLKKKLKRMI.

The protein belongs to the CT45 family. Testis specific. Expressed in cancer cell lines.

In Homo sapiens (Human), this protein is Cancer/testis antigen family 45 member A2.